The chain runs to 203 residues: Protein-methionine-sulfoxide reductase heme-binding subunit MsrQ (203 aa).

6 helical membrane passes run Ile-10–Leu-30, Ile-37–Thr-57, Leu-75–Leu-95, Pro-110–Asn-130, Leu-147–Leu-167, and Glu-169–Trp-189.

Belongs to the MsrQ family. Heterodimer of a catalytic subunit (MsrP) and a heme-binding subunit (MsrQ). The cofactor is FMN. Heme b is required as a cofactor.

Its subcellular location is the cell inner membrane. Its function is as follows. Part of the MsrPQ system that repairs oxidized periplasmic proteins containing methionine sulfoxide residues (Met-O), using respiratory chain electrons. Thus protects these proteins from oxidative-stress damage caused by reactive species of oxygen and chlorine generated by the host defense mechanisms. MsrPQ is essential for the maintenance of envelope integrity under bleach stress, rescuing a wide series of structurally unrelated periplasmic proteins from methionine oxidation. MsrQ provides electrons for reduction to the reductase catalytic subunit MsrP, using the quinone pool of the respiratory chain. The polypeptide is Protein-methionine-sulfoxide reductase heme-binding subunit MsrQ (Pseudomonas entomophila (strain L48)).